The following is a 40-amino-acid chain: Lucifensin (40 aa).

3 cysteine pairs are disulfide-bonded: Cys-3/Cys-30, Cys-16/Cys-36, and Cys-20/Cys-38.

Belongs to the invertebrate defensin family. Type 1 subfamily. The disulfide bonds are essential for antimicrobial activity. Larval fat body, hemolymph and salivary glands (at protein level).

The protein resides in the secreted. Its function is as follows. Shows strong antibacterial activity against the Gram-positive bacterium M.luteus. Also shows antibacterial activity against the Gram-positive bacteria E.fecalis, S.aureus, S.carnosus, S.pneumoniae and S.pyogenes and against a number of methicillin-resistant S.aureus and glycopeptide-intermediate S.aureus isolates. Does not show antibacterial activity against Gram-negative bacteria or antifungal activity against C.utilis. Shows slight antifungal activity against C.albicans. This is Lucifensin from Lucilia cuprina (Green bottle fly).